The chain runs to 510 residues: Abscisic acid 8'-hydroxylase 2 (510 aa).

Residues 3–23 (FLLFFVFVTAAVLCFVVPAFL) form a helical membrane-spanning segment. Heme is bound at residue C441.

Belongs to the cytochrome P450 family. Requires heme as cofactor.

Its subcellular location is the membrane. It catalyses the reaction 2-cis-(+)-abscisate + reduced [NADPH--hemoprotein reductase] + O2 = (+)-8'-hydroxyabscisate + oxidized [NADPH--hemoprotein reductase] + H2O + H(+). It participates in plant hormone degradation; abscisic acid degradation. Its function is as follows. Involved in the oxidative degradation of abscisic acid. This is Abscisic acid 8'-hydroxylase 2 (CYP707A6) from Oryza sativa subsp. japonica (Rice).